A 430-amino-acid polypeptide reads, in one-letter code: Dihydrofolate synthase/folylpolyglutamate synthase (430 aa).

Residue 51–54 participates in ATP binding; that stretch reads GKGS. Residue Ser-75 participates in Mg(2+) binding. 7,8-dihydropteroate is bound at residue 114-117; that stretch reads TEYG. Position 145 (Glu-145) interacts with Mg(2+). 7,8-dihydropteroate is bound at residue 152 to 154; sequence FDS. His-172 contacts Mg(2+). Gln-263, Arg-302, and Asp-315 together coordinate ATP.

It belongs to the folylpolyglutamate synthase family. As to quaternary structure, monomer. Mg(2+) is required as a cofactor.

It catalyses the reaction 7,8-dihydropteroate + L-glutamate + ATP = 7,8-dihydrofolate + ADP + phosphate + H(+). It carries out the reaction (6S)-5,6,7,8-tetrahydrofolyl-(gamma-L-Glu)(n) + L-glutamate + ATP = (6S)-5,6,7,8-tetrahydrofolyl-(gamma-L-Glu)(n+1) + ADP + phosphate + H(+). It participates in cofactor biosynthesis; tetrahydrofolate biosynthesis; 7,8-dihydrofolate from 2-amino-4-hydroxy-6-hydroxymethyl-7,8-dihydropteridine diphosphate and 4-aminobenzoate: step 2/2. The protein operates within cofactor biosynthesis; tetrahydrofolylpolyglutamate biosynthesis. Functionally, functions in two distinct reactions of the de novo folate biosynthetic pathway. Catalyzes the addition of a glutamate residue to dihydropteroate (7,8-dihydropteroate or H2Pte) to form dihydrofolate (7,8-dihydrofolate monoglutamate or H2Pte-Glu). Also catalyzes successive additions of L-glutamate to tetrahydrofolate, leading to folylpolyglutamate derivatives. In Bacillus subtilis (strain 168), this protein is Dihydrofolate synthase/folylpolyglutamate synthase (folC).